A 111-amino-acid polypeptide reads, in one-letter code: Fluoride-specific ion channel FluC (111 aa).

3 helical membrane-spanning segments follow: residues G2–L22, G36–I56, and F71–I91. Na(+) contacts are provided by G79 and T82.

The protein belongs to the fluoride channel Fluc/FEX (TC 1.A.43) family.

It localises to the cell inner membrane. It carries out the reaction fluoride(in) = fluoride(out). Na(+) is not transported, but it plays an essential structural role and its presence is essential for fluoride channel function. In terms of biological role, fluoride-specific ion channel. Important for reducing fluoride concentration in the cell, thus reducing its toxicity. The polypeptide is Fluoride-specific ion channel FluC (Francisella tularensis subsp. holarctica (strain FTNF002-00 / FTA)).